Here is a 350-residue protein sequence, read N- to C-terminus: Tetraacyldisaccharide 4'-kinase (350 aa).

Residue 48–55 (SAGGTGKT) participates in ATP binding.

Belongs to the LpxK family.

The enzyme catalyses a lipid A disaccharide + ATP = a lipid IVA + ADP + H(+). The protein operates within glycolipid biosynthesis; lipid IV(A) biosynthesis; lipid IV(A) from (3R)-3-hydroxytetradecanoyl-[acyl-carrier-protein] and UDP-N-acetyl-alpha-D-glucosamine: step 6/6. Transfers the gamma-phosphate of ATP to the 4'-position of a tetraacyldisaccharide 1-phosphate intermediate (termed DS-1-P) to form tetraacyldisaccharide 1,4'-bis-phosphate (lipid IVA). This chain is Tetraacyldisaccharide 4'-kinase, found in Chlorobium limicola (strain DSM 245 / NBRC 103803 / 6330).